The following is a 103-amino-acid chain: Preprofallaxidin-6 (103 aa).

The signal sequence occupies residues 1–22; the sequence is MASLKKSLFLVLFLGFVSLSIC. A propeptide spanning residues 23-49 is cleaved from the precursor; it reads EEEKRENEGNENEEEDENHEEGSEEKR. Residues 24–50 form a disordered region; sequence EEKRENEGNENEEEDENHEEGSEEKRG. Acidic residues predominate over residues 31 to 41; that stretch reads GNENEEEDENH. Leucine amide is present on Leu65. The tract at residues 67-103 is disordered; sequence KRSEEKRYHPFGKRSEEKRYHPFGKRSEEKRYPPIGK. The propeptide occupies 69–73; that stretch reads SEEKR. Residue Phe77 is modified to Phenylalanine amide. Residues 81 to 85 constitute a propeptide that is removed on maturation; sequence SEEKR. Phe89 is subject to Phenylalanine amide. The propeptide occupies 93 to 97; that stretch reads SEEKR. Isoleucine amide is present on Ile101.

This sequence belongs to the frog skin active peptide (FSAP) family. Brevinin subfamily. In terms of tissue distribution, expressed by the skin glands.

It is found in the secreted. Fallaxidin-1.3 shows no antibacterial activity against Gram-positive or Gram-negative bacteria. Does not inhibit the formation of NO by neuronal nitric oxide synthase. Has no effect on splenocyte proliferation or smooth muscle contraction. Its function is as follows. Fallaxidin-1.4 shows no antibacterial activity against Gram-positive or Gram-negative bacteria. Does not inhibit the formation of NO by neuronal nitric oxide synthase. Has no effect on splenocyte proliferation or smooth muscle contraction. In terms of biological role, fallaxidin-3.1 shows antibacterial activity against the Gram-positive bacteria E.faecalis (MIC=100 uM) and L.lactis (MIC=100 uM). No antibacterial activity against the Gram-positive bacteria B.cereus, L.innocua, M.luteus, S.epidermidis, S.uberis and S.aureus, or the Gram-negative bacteria E.cloacae and E.coli. The protein is Preprofallaxidin-6 of Litoria fallax (Eastern dwarf tree frog).